The primary structure comprises 146 residues: Hemoglobin subunit beta (146 aa).

Residue Val-1 is modified to N-acetylvaline. A Globin domain is found at 2–146 (HLTAEEKDAV…VANALAHRYH (145 aa)). The residue at position 44 (Ser-44) is a Phosphoserine. The residue at position 59 (Lys-59) is an N6-acetyllysine. His-63 contributes to the heme b binding site. Residue Lys-82 is modified to N6-acetyllysine. Position 92 (His-92) interacts with heme b. Cys-93 is subject to S-nitrosocysteine.

This sequence belongs to the globin family. Heterotetramer of two alpha chains and two beta chains. In terms of tissue distribution, red blood cells.

Functionally, involved in oxygen transport from the lung to the various peripheral tissues. This is Hemoglobin subunit beta (HBB) from Hippopotamus amphibius (Hippopotamus).